Reading from the N-terminus, the 180-residue chain is UPF0398 protein EF_1150 (180 aa).

This sequence belongs to the UPF0398 family.

This Enterococcus faecalis (strain ATCC 700802 / V583) protein is UPF0398 protein EF_1150.